The chain runs to 451 residues: 12S seed storage protein CRD (451 aa).

An N-terminal signal peptide occupies residues 1–25 (MHKLLFSLLSVVSLSFLLFFHGAEA). Cystine bridges form between Cys-36–Cys-69 and Cys-112–Cys-277. Ser-39 carries the post-translational modification Phosphoserine. Cupin type-1 domains are found at residues 42–234 (NSLA…ETAK) and 283–432 (ENID…EEAK). The residue at position 115 (Thr-115) is a Phosphothreonine. Ser-302 carries the post-translational modification Phosphoserine. Position 396 is a phosphothreonine (Thr-396). Ser-437 is modified (phosphoserine).

The protein belongs to the 11S seed storage protein (globulins) family. Hexamer; each subunit is composed of an acidic and a basic chain derived from a single precursor and linked by a disulfide bond. In terms of processing, ubiquitinated. Proteolytically processed during seed maturation at a conserved Asn-Gly peptide bond by an asparaginyl endopeptidase to produce two mature polypeptides referred to as alpha and beta subunits that are joined together by a disulfide bond. Post-translationally, phosphorylated in seeds on some Tyr residues in response to abscisic acid (ABA). As to expression, accumulates in seeds 8 days after anthesis.

It localises to the protein storage vacuole. Functionally, seed storage protein. This Arabidopsis thaliana (Mouse-ear cress) protein is 12S seed storage protein CRD (CRD).